The chain runs to 448 residues: Portal protein (448 aa).

The tract at residues 1–25 (MAKRGRKPKELVPGPGSIDPSDVPK) is disordered.

This sequence belongs to the P23virus portal protein family. In terms of assembly, homododecamer. Interacts with the capsid protein. Interacts with the terminase large subunit; this interaction allows the packaging of viral DNA.

The protein resides in the virion. Forms the portal vertex of the capsid. This portal plays critical roles in head assembly, genome packaging, neck/tail attachment, and genome ejection. The portal protein multimerizes as a single ring-shaped homododecamer arranged around a central channel. Forms the portal vertex of the capsid. This portal plays critical roles in head assembly, genome packaging, neck/tail attachment, and genome ejection. The protein is Portal protein of Thermus thermophilus (Thermus thermophilus phage P23-45).